The primary structure comprises 204 residues: ADP-ribosylation factor-like protein 15 (204 aa).

Residues 39-46, 82-86, and 142-145 each bind GTP; these read GLTGSGKT, ELGGA, and NHQD.

It belongs to the small GTPase superfamily. Arf family.

The chain is ADP-ribosylation factor-like protein 15 (Arl15) from Mus musculus (Mouse).